A 380-amino-acid chain; its full sequence is Lipid-A-disaccharide synthase (380 aa).

This sequence belongs to the LpxB family.

The enzyme catalyses a lipid X + a UDP-2-N,3-O-bis[(3R)-3-hydroxyacyl]-alpha-D-glucosamine = a lipid A disaccharide + UDP + H(+). It participates in bacterial outer membrane biogenesis; LPS lipid A biosynthesis. Its function is as follows. Condensation of UDP-2,3-diacylglucosamine and 2,3-diacylglucosamine-1-phosphate to form lipid A disaccharide, a precursor of lipid A, a phosphorylated glycolipid that anchors the lipopolysaccharide to the outer membrane of the cell. The sequence is that of Lipid-A-disaccharide synthase from Rickettsia typhi (strain ATCC VR-144 / Wilmington).